The sequence spans 123 residues: Large ribosomal subunit protein uL18 (123 aa).

The protein belongs to the universal ribosomal protein uL18 family. In terms of assembly, part of the 50S ribosomal subunit; part of the 5S rRNA/L5/L18/L25 subcomplex. Contacts the 5S and 23S rRNAs.

Functionally, this is one of the proteins that bind and probably mediate the attachment of the 5S RNA into the large ribosomal subunit, where it forms part of the central protuberance. The chain is Large ribosomal subunit protein uL18 from Desulforudis audaxviator (strain MP104C).